The chain runs to 297 residues: N-acetylmuramic acid 6-phosphate etherase (297 aa).

Residues 55–218 enclose the SIS domain; sequence AAAALKAGGR…STGAMVKLGK (164 aa). Glutamate 83 functions as the Proton donor in the catalytic mechanism. The active site involves glutamate 114.

This sequence belongs to the GCKR-like family. MurNAc-6-P etherase subfamily. Homodimer.

It carries out the reaction N-acetyl-D-muramate 6-phosphate + H2O = N-acetyl-D-glucosamine 6-phosphate + (R)-lactate. It functions in the pathway amino-sugar metabolism; 1,6-anhydro-N-acetylmuramate degradation. It participates in amino-sugar metabolism; N-acetylmuramate degradation. The protein operates within cell wall biogenesis; peptidoglycan recycling. In terms of biological role, specifically catalyzes the cleavage of the D-lactyl ether substituent of MurNAc 6-phosphate, producing GlcNAc 6-phosphate and D-lactate. Together with AnmK, is also required for the utilization of anhydro-N-acetylmuramic acid (anhMurNAc) either imported from the medium or derived from its own cell wall murein, and thus plays a role in cell wall recycling. The sequence is that of N-acetylmuramic acid 6-phosphate etherase from Serratia proteamaculans (strain 568).